The primary structure comprises 118 residues: Putative pterin-4-alpha-carbinolamine dehydratase (118 aa).

The protein belongs to the pterin-4-alpha-carbinolamine dehydratase family.

It carries out the reaction (4aS,6R)-4a-hydroxy-L-erythro-5,6,7,8-tetrahydrobiopterin = (6R)-L-erythro-6,7-dihydrobiopterin + H2O. The protein is Putative pterin-4-alpha-carbinolamine dehydratase (phhB) of Xanthomonas axonopodis pv. citri (strain 306).